The following is a 394-amino-acid chain: DNA replication and repair protein RecF (394 aa).

30-37 (GSNGQGKT) contributes to the ATP binding site.

Belongs to the RecF family.

It localises to the cytoplasm. Functionally, the RecF protein is involved in DNA metabolism; it is required for DNA replication and normal SOS inducibility. RecF binds preferentially to single-stranded, linear DNA. It also seems to bind ATP. This is DNA replication and repair protein RecF from Cutibacterium acnes (strain DSM 16379 / KPA171202) (Propionibacterium acnes).